Here is a 660-residue protein sequence, read N- to C-terminus: Bifunctional polymyxin resistance protein ArnA (660 aa).

Residues 1–304 (MKTVVFAYHD…TLGLVQGSRL (304 aa)) form a formyltransferase ArnAFT region. 86–88 (HLI) serves as a coordination point for (6R)-10-formyltetrahydrofolate. Residue histidine 104 is the Proton donor; for formyltransferase activity of the active site. (6R)-10-formyltetrahydrofolate contacts are provided by residues arginine 114 and 136–140 (VKRAD). The dehydrogenase ArnADH stretch occupies residues 314-660 (RRTRVLILGV…RTVDLTDKPS (347 aa)). NAD(+) contacts are provided by residues aspartate 347 and 368-369 (DI). Residues alanine 393, tyrosine 398, and 432 to 433 (TS) contribute to the UDP-alpha-D-glucuronate site. Glutamate 434 functions as the Proton acceptor; for decarboxylase activity in the catalytic mechanism. UDP-alpha-D-glucuronate is bound by residues arginine 460, asparagine 492, 526–535 (KLIDGGKQKR), and tyrosine 613. Arginine 619 (proton donor; for decarboxylase activity) is an active-site residue.

In the N-terminal section; belongs to the Fmt family. UDP-L-Ara4N formyltransferase subfamily. It in the C-terminal section; belongs to the NAD(P)-dependent epimerase/dehydratase family. UDP-glucuronic acid decarboxylase subfamily. As to quaternary structure, homohexamer, formed by a dimer of trimers.

It carries out the reaction UDP-alpha-D-glucuronate + NAD(+) = UDP-beta-L-threo-pentopyranos-4-ulose + CO2 + NADH. The enzyme catalyses UDP-4-amino-4-deoxy-beta-L-arabinose + (6R)-10-formyltetrahydrofolate = UDP-4-deoxy-4-formamido-beta-L-arabinose + (6S)-5,6,7,8-tetrahydrofolate + H(+). The protein operates within nucleotide-sugar biosynthesis; UDP-4-deoxy-4-formamido-beta-L-arabinose biosynthesis; UDP-4-deoxy-4-formamido-beta-L-arabinose from UDP-alpha-D-glucuronate: step 1/3. Its pathway is nucleotide-sugar biosynthesis; UDP-4-deoxy-4-formamido-beta-L-arabinose biosynthesis; UDP-4-deoxy-4-formamido-beta-L-arabinose from UDP-alpha-D-glucuronate: step 3/3. It functions in the pathway bacterial outer membrane biogenesis; lipopolysaccharide biosynthesis. Functionally, bifunctional enzyme that catalyzes the oxidative decarboxylation of UDP-glucuronic acid (UDP-GlcUA) to UDP-4-keto-arabinose (UDP-Ara4O) and the addition of a formyl group to UDP-4-amino-4-deoxy-L-arabinose (UDP-L-Ara4N) to form UDP-L-4-formamido-arabinose (UDP-L-Ara4FN). The modified arabinose is attached to lipid A and is required for resistance to polymyxin and cationic antimicrobial peptides. The polypeptide is Bifunctional polymyxin resistance protein ArnA (Escherichia coli O127:H6 (strain E2348/69 / EPEC)).